The chain runs to 146 residues: Angiogenin (146 aa).

The first 24 residues, 1–24 (MAMSLCPLLLVFVLGLGLTPPSLA), serve as a signal peptide directing secretion. Gln-25 carries the pyrrolidone carboxylic acid modification. Residue His-37 is the Proton acceptor of the active site. Arg-45 lines the tRNA pocket. 3 disulfides stabilise this stretch: Cys-50–Cys-105, Cys-63–Cys-116, and Cys-81–Cys-131. The short motif at 55–59 (VRRHL) is the Nucleolar localization signal element. Residues Cys-105 and Ile-127 each contribute to the tRNA site. His-138 serves as the catalytic Proton donor.

Belongs to the pancreatic ribonuclease family. As to quaternary structure, homodimer. Interacts with RNH1; inhibiting ANG ribonuclease activity. Interacts with PCNA.

The protein resides in the secreted. Its subcellular location is the nucleus. It is found in the nucleolus. It localises to the cytoplasm. The protein localises to the stress granule. Has weak tRNA ribonuclease activity by itself due to partial autoinhibition by its C-terminus, which folds into a short alpha-helix that partially occludes the substrate-binding site. In absence of stress, the ribonuclease activity is inhibited by RNH1 in the cytoplasm. In response to stress, dissociates from RNH1 in the cytoplasm and associates with cytoplasmic ribosomes with vacant A-sites: ribosomes directly activate the tRNA ribonuclease activity of ANG by refolding the C-terminal alpha-helix. In response to stress, the angiogenic activity of ANG is inhibited by RNH1 in the nucleus. Secreted ribonuclease that can either promote or restrict cell proliferation of target cells, depending on the context. Endocytosed in target cells via its receptor PLXNB2 and translocates to the cytoplasm or nucleus. Under stress conditions, localizes to the cytoplasm and promotes the assembly of stress granules (SGs): specifically cleaves a subset of tRNAs within anticodon loops to produce tRNA-derived stress-induced fragments (tiRNAs), resulting in translation repression and inhibition of cell proliferation. tiRNas also prevent formation of apoptosome, thereby promoting cell survival. Preferentially cleaves RNAs between a pyrimidine and an adenosine residue, suggesting that it cleaves the anticodon loop of tRNA(Ala) (32-UUAGCAU-38) after positions 33 and 36. Cleaves a subset of tRNAs, including tRNA(Ala), tRNA(Glu), tRNA(Gly), tRNA(Lys), tRNA(Val), tRNA(His), tRNA(Asp) and tRNA(Sec). Under growth conditions and in differentiated cells, translocates to the nucleus and stimulates ribosomal RNA (rRNA) transcription, including that containing the initiation site sequences of 45S rRNA, thereby promoting cell growth and proliferation. Angiogenin induces vascularization of normal and malignant tissues via its ability to promote rRNA transcription. Involved in hematopoietic stem and progenitor cell (HSPC) growth and survival by promoting rRNA transcription in growth conditions and inhibiting translation in response to stress, respectively. Mediates the crosstalk between myeloid and intestinal epithelial cells to protect the intestinal epithelial barrier integrity: secreted by myeloid cells and promotes intestinal epithelial cells proliferation and survival. Also mediates osteoclast-endothelial cell crosstalk in growing bone: produced by osteoclasts and protects the neighboring vascular cells against senescence by promoting rRNA transcription. The polypeptide is Angiogenin (ANG) (Equus caballus (Horse)).